We begin with the raw amino-acid sequence, 437 residues long: GTPase Der (437 aa).

EngA-type G domains are found at residues 3 to 168 (PLIA…PCPE) and 178 to 353 (IKLA…LNRR). GTP-binding positions include 9 to 16 (GRPNVGKS), 56 to 60 (DTGGY), 120 to 123 (NKVD), 184 to 191 (GRPNVGKS), 231 to 235 (DTAGL), and 296 to 299 (NKWD). In terms of domain architecture, KH-like spans 354 to 437 (QKISTSNLNR…IPITMRFLRK (84 aa)).

It belongs to the TRAFAC class TrmE-Era-EngA-EngB-Septin-like GTPase superfamily. EngA (Der) GTPase family. As to quaternary structure, associates with the 50S ribosomal subunit.

Its function is as follows. GTPase that plays an essential role in the late steps of ribosome biogenesis. This chain is GTPase Der, found in Chlorobaculum tepidum (strain ATCC 49652 / DSM 12025 / NBRC 103806 / TLS) (Chlorobium tepidum).